A 317-amino-acid polypeptide reads, in one-letter code: Melanocyte-stimulating hormone receptor (317 aa).

The Extracellular segment spans residues 1-37; sequence MPMQGAQRKLLGSLNSTPTATSNLGLAANHTGAPCLE. Asn29 carries N-linked (GlcNAc...) asparagine glycosylation. The helical transmembrane segment at 38–63 threads the bilayer; the sequence is VSIPDGLFLSLGLVSLVENVLVVAAV. At 64–72 the chain is on the cytoplasmic side; it reads AKNRNLHSS. The helical transmembrane segment at 73-93 threads the bilayer; sequence MYCFICCLALSDLLVSGSNML. Residues 94–118 lie on the Extracellular side of the membrane; the sequence is ETAVILLLETGALATRTSVVQQLHN. A helical transmembrane segment spans residues 119–140; the sequence is TINVLTCSSMLCSLCFLGAIAV. The Cytoplasmic segment spans residues 141–163; it reads DRYISIFYALRYHSIMTLPRAQR. A helical membrane pass occupies residues 164 to 183; sequence AIAAIWVASVLSSTLFITYY. Over 184-191 the chain is Extracellular; that stretch reads DHAAVLLC. A helical membrane pass occupies residues 192 to 211; sequence LVVFFLAMLVLMAVLYVHML. The Cytoplasmic segment spans residues 212-240; the sequence is ARACQHAHGIIRLHKRQTPAHQGFGLRGA. The chain crosses the membrane as a helical span at residues 241–266; the sequence is ATLTILLGIFFLCWGPFFLHLTLVVF. Residues 267-279 are Extracellular-facing; sequence CPQHLTCSCIFKN. The helical transmembrane segment at 280–300 threads the bilayer; that stretch reads FKVFLTLIICNTIIDPLIYAF. Topologically, residues 301-317 are cytoplasmic; it reads RSQELRRTLKEVLLCSW. Cys315 carries S-palmitoyl cysteine lipidation.

This sequence belongs to the G-protein coupled receptor 1 family. Interacts with MGRN1, but does not undergo MGRN1-mediated ubiquitination; this interaction competes with GNAS-binding and thus inhibits agonist-induced cAMP production. Interacts with OPN3; the interaction results in a decrease in MC1R-mediated cAMP signaling and ultimately a decrease in melanin production in melanocytes.

The protein resides in the cell membrane. Functionally, receptor for MSH (alpha, beta and gamma) and ACTH. The activity of this receptor is mediated by G proteins which activate adenylate cyclase. Mediates melanogenesis, the production of eumelanin (black/brown) and phaeomelanin (red/yellow), via regulation of cAMP signaling in melanocytes. This is Melanocyte-stimulating hormone receptor (MC1R) from Saguinus oedipus (Cotton-top tamarin).